The sequence spans 395 residues: Testis-expressed protein 44 (395 aa).

Disordered regions lie at residues 1–32, 46–100, 133–215, and 235–258; these read MALP…PLTA, WQDI…LQVS, KMSQ…SDES, and FPPP…GRRP. Residues 53-65 show a composition bias toward polar residues; that stretch reads SFKTATPRAISTS. A compositionally biased stretch (low complexity) spans 87–98; that stretch reads PLLPSQNPSPLQ. Over residues 192 to 207 the composition is skewed to basic and acidic residues; it reads SAEEKAEHPKAPHPEA. Residue Ser333 is modified to Phosphoserine.

Testis. Detected in germ cells at all stages of the seminiferous epithelium, strong expression in elongating spermatids (at protein level).

The protein resides in the cytoplasm. The protein is Testis-expressed protein 44 of Homo sapiens (Human).